Here is a 505-residue protein sequence, read N- to C-terminus: Alpha-ketoglutarate-dependent dioxygenase FTO (505 aa).

Thr-4 bears the Phosphothreonine mark. The fe2OG dioxygenase domain stretch occupies residues 32-327; it reads TPKDDEFYQQ…SSTHRVAECS (296 aa). Substrate contacts are provided by Arg-96 and Tyr-108. Residue Asn-205 coordinates 2-oxoglutarate. The interval 213–224 is loop L1; predicted to block binding of double-stranded DNA or RNA; sequence PYLKEEPYFGMG. Position 216 is an N6-acetyllysine (Lys-216). His-231 and Asp-233 together coordinate Fe cation. Substrate is bound at residue 231–234; it reads HHDE. Tyr-295 lines the 2-oxoglutarate pocket. His-307 provides a ligand contact to Fe cation. 2-oxoglutarate contacts are provided by residues 316-318, Thr-320, and Arg-322; that span reads RFS.

Belongs to the fto family. In terms of assembly, monomer. May also exist as homodimer. Requires Fe(2+) as cofactor.

Its subcellular location is the nucleus. It is found in the nucleus speckle. The protein localises to the cytoplasm. It carries out the reaction a 5'-end (N(7)-methyl 5'-triphosphoguanosine)-(N(6),2'-O-dimethyladenosine) in mRNA + 2-oxoglutarate + O2 = a 5'-end (N(7)-methyl 5'-triphosphoguanosine)-(2'-O-methyladenosine) in mRNA + formaldehyde + succinate + CO2. The catalysed reaction is an N(6)-methyladenosine in mRNA + 2-oxoglutarate + O2 = an adenosine in mRNA + formaldehyde + succinate + CO2. The enzyme catalyses N(6)-methyladenosine in U6 snRNA + 2-oxoglutarate + O2 = adenosine in U6 snRNA + formaldehyde + succinate + CO2. It catalyses the reaction a 5'-end (N(7)-methyl 5'-triphosphoguanosine)-(N(6),2'-O-dimethyladenosine) in U6 snRNA + 2-oxoglutarate + O2 = a 5'-end (N(7)-methyl 5'-triphosphoguanosine)-(2'-O-methyladenosine) in U6 snRNA + formaldehyde + succinate + CO2. It carries out the reaction an N(1)-methyladenosine in tRNA + 2-oxoglutarate + O2 = an adenosine in tRNA + formaldehyde + succinate + CO2. Activated by ascorbate. Inhibited by N-oxalylglycine, fumarate and succinate. RNA demethylase that mediates oxidative demethylation of different RNA species, such as mRNAs, tRNAs and snRNAs, and acts as a regulator of fat mass, adipogenesis and energy homeostasis. Specifically demethylates N(6)-methyladenosine (m6A) RNA, the most prevalent internal modification of messenger RNA (mRNA) in higher eukaryotes. M6A demethylation by FTO affects mRNA expression and stability. Also able to demethylate m6A in U6 small nuclear RNA (snRNA). Mediates demethylation of N(6),2'-O-dimethyladenosine cap (m6A(m)), by demethylating the N(6)-methyladenosine at the second transcribed position of mRNAs and U6 snRNA. Demethylation of m6A(m) in the 5'-cap by FTO affects mRNA stability by promoting susceptibility to decapping. Also acts as a tRNA demethylase by removing N(1)-methyladenine from various tRNAs. Has no activity towards 1-methylguanine. Has no detectable activity towards double-stranded DNA. Also able to repair alkylated DNA and RNA by oxidative demethylation: demethylates single-stranded RNA containing 3-methyluracil, single-stranded DNA containing 3-methylthymine and has low demethylase activity towards single-stranded DNA containing 1-methyladenine or 3-methylcytosine. Ability to repair alkylated DNA and RNA is however unsure in vivo. Involved in the regulation of fat mass, adipogenesis and body weight, thereby contributing to the regulation of body size and body fat accumulation. Involved in the regulation of thermogenesis and the control of adipocyte differentiation into brown or white fat cells. Regulates activity of the dopaminergic midbrain circuitry via its ability to demethylate m6A in mRNAs. This Pongo abelii (Sumatran orangutan) protein is Alpha-ketoglutarate-dependent dioxygenase FTO.